Here is a 186-residue protein sequence, read N- to C-terminus: Acireductone dioxygenase (186 aa).

4 residues coordinate Fe(2+): H103, H105, E109, and H147. H103, H105, E109, and H147 together coordinate Ni(2+).

It belongs to the acireductone dioxygenase (ARD) family. Monomer. The cofactor is Fe(2+). Ni(2+) serves as cofactor.

The catalysed reaction is 1,2-dihydroxy-5-(methylsulfanyl)pent-1-en-3-one + O2 = 3-(methylsulfanyl)propanoate + CO + formate + 2 H(+). It catalyses the reaction 1,2-dihydroxy-5-(methylsulfanyl)pent-1-en-3-one + O2 = 4-methylsulfanyl-2-oxobutanoate + formate + 2 H(+). It functions in the pathway amino-acid biosynthesis; L-methionine biosynthesis via salvage pathway; L-methionine from S-methyl-5-thio-alpha-D-ribose 1-phosphate: step 5/6. Its function is as follows. Catalyzes 2 different reactions between oxygen and the acireductone 1,2-dihydroxy-3-keto-5-methylthiopentene (DHK-MTPene) depending upon the metal bound in the active site. Fe-containing acireductone dioxygenase (Fe-ARD) produces formate and 2-keto-4-methylthiobutyrate (KMTB), the alpha-ketoacid precursor of methionine in the methionine recycle pathway. Ni-containing acireductone dioxygenase (Ni-ARD) produces methylthiopropionate, carbon monoxide and formate, and does not lie on the methionine recycle pathway. The polypeptide is Acireductone dioxygenase (Synechococcus sp. (strain CC9605)).